The chain runs to 368 residues: 3-dehydroquinate synthase (368 aa).

Residues 69–74 (DGEAYK), 103–107 (GVIGD), 127–128 (TT), Lys140, and Lys149 each bind NAD(+). Zn(2+)-binding residues include Glu182, His245, and His262.

The protein belongs to the sugar phosphate cyclases superfamily. Dehydroquinate synthase family. It depends on Co(2+) as a cofactor. Zn(2+) is required as a cofactor. NAD(+) serves as cofactor.

Its subcellular location is the cytoplasm. The catalysed reaction is 7-phospho-2-dehydro-3-deoxy-D-arabino-heptonate = 3-dehydroquinate + phosphate. It functions in the pathway metabolic intermediate biosynthesis; chorismate biosynthesis; chorismate from D-erythrose 4-phosphate and phosphoenolpyruvate: step 2/7. Catalyzes the conversion of 3-deoxy-D-arabino-heptulosonate 7-phosphate (DAHP) to dehydroquinate (DHQ). The sequence is that of 3-dehydroquinate synthase from Pseudomonas paraeruginosa (strain DSM 24068 / PA7) (Pseudomonas aeruginosa (strain PA7)).